We begin with the raw amino-acid sequence, 157 residues long: uncharacterized protein (157 aa).

The N-terminal stretch at 1 to 30 is a signal peptide; the sequence is MLPEQGPQPSTMPLWCLLAACTSLPRQAAT.

The protein resides in the secreted. This is an uncharacterized protein from Homo sapiens (Human).